We begin with the raw amino-acid sequence, 122 residues long: Large ribosomal subunit protein uL14 (122 aa).

It belongs to the universal ribosomal protein uL14 family. As to quaternary structure, part of the 50S ribosomal subunit. Forms a cluster with proteins L3 and L19. In the 70S ribosome, L14 and L19 interact and together make contacts with the 16S rRNA in bridges B5 and B8.

Functionally, binds to 23S rRNA. Forms part of two intersubunit bridges in the 70S ribosome. In Rickettsia bellii (strain OSU 85-389), this protein is Large ribosomal subunit protein uL14.